The sequence spans 177 residues: MSTQIPMDPPKFLCMPARPLVVGLAVFGAIRSFVQFWMSSGFGMAGTHFCVLLLDLLLLFGAYKNDVFALKWSQRVTFACVLIAIIRFMIYPVVFASYMASGLSRNFTGIDSEEIEILGNVTTPEQNFVFGMISGFTLEFATALSIGVESLKYLLVHRLWEYAKATEASSSSRYVIP.

3 helical membrane passes run 19–39 (PLVVGLAVFGAIRSFVQFWMS), 42–62 (FGMAGTHFCVLLLDLLLLFGA), and 76–96 (VTFACVLIAIIRFMIYPVVFA).

It localises to the membrane. The polypeptide is Glia associated membrane protein glam-1 (Caenorhabditis elegans).